Reading from the N-terminus, the 780-residue chain is MATEAAPMDEKAKRMRDLLSSFYAPDPSISTSGSSINASFDNINSTSFDADQYMDLMIKKSNLEVLLQRHVQMAAEIKNLDTDLQMLVYENYNKFISATDTIKRMKSNIFGMEGNMDQLLQKIMSVQSKSDGVNTSLFEKREHIEKLHRTRNLLRKVQFIYDLPARLQKCIKSEAYGDAVRFYTGAMPILKVYGDTSFQDCRRASEEAIEIIIKNLQTKLFSDSESIQARAEAAVLLKQLDVPVDSLKAKLLEKLEQSLDGLQIKPEEASTLVEDDDSSNDTESNDQHPAKIHEDAVRGFSEAIRAYREIFPDSEERLFKLARALTAMHFEYMELYIKKRVSAADFLGIFRIVWEDVVLMDEVLPEAALSDLSAEAAQVTLKQFVARMFSHLQQDISDTLLKFDINQKEAVEGELLKVVLEASQKAVLQGTTNIFQDFRQLLDEKTGIFIKMKDLISGWIQKGSQDFFRSLEAQFLVLSGKTSSSNDIEGKSSDKIHAGLILVLAQLSVFIEQKVIPRVTEEIAASFSGGNSQAFENGPAFIPGELCRVFHAASEKLLQHYIDTRTQKVSVLLRKRFKTPNWVKHKEPREVHMYVDMFLHELEEVGKEVKQVLPQGTFRKHKRTDSNGSNTTTSSRSNTLHNDKMARSNSQRARSQLFETHLAKLFKQKVEIFTKVEFTQESVVTTTVKLCLKSLQEYVRLQTFNRSGFQQIQLDIQFLKAPLKEAVEDEAAIDFLLDEVIVAASERCLDVIPLEPPILDKLIQAKLAKSKEHNNNTVSS.

Ala-2 bears the N-acetylalanine mark. 2 disordered regions span residues 270 to 292 (STLV…PAKI) and 615 to 651 (QGTF…SNSQ). Positions 273–284 (VEDDDSSNDTES) are enriched in acidic residues. A compositionally biased stretch (low complexity) spans 626 to 639 (SNGSNTTTSSRSNT).

The protein belongs to the VPS51 family. Component of the Golgi-associated retrograde protein (GARP) complex, composed by VPS51, VPS52, VPS53 and VPS54. Component of the endosome-associated retrograde protein (EARP) complex, composed of VPS51, VPS52, VPS53 and VPS50. Interacts with VPS52. Expressed in primary and lateral roots, shoots of seedlings and flowers.

The protein resides in the golgi apparatus. It localises to the trans-Golgi network. It is found in the recycling endosome. The protein localises to the prevacuolar compartment. Its function is as follows. Acts as a component of the GARP complex that is involved in retrograde transport from early and late endosomes to the trans-Golgi network (TGN). The GARP complex is required for the maintenance of protein retrieval from endosomes to the TGN, acid hydrolase sorting, lysosome function, endosomal cholesterol traffic and autophagy. VPS51 participates in retrograde transport of acid hydrolase receptors, likely by promoting tethering and SNARE-dependent fusion of endosome-derived carriers to the TGN. Acts as a component of the EARP complex that is involved in endocytic recycling. The EARP complex associates with Rab4-positive endosomes and promotes recycling of internalized transferrin receptor (TFRC) to the plasma membrane. Required for vacuolar targeting and cellular trafficking. Involved in the regulation of vascular tissue patterning, probably by regulating PIN1 expression pattern, thus modulating auxin flux. Important to prevent PIN1 accumulation within margin cells, possibly by targeting PIN1 to the lytic vacuole. Regulates PIN1 and ATHB8 expression pattern in secondary veins. The polypeptide is Vacuolar protein sorting-associated protein 51 homolog (Arabidopsis thaliana (Mouse-ear cress)).